Here is a 444-residue protein sequence, read N- to C-terminus: NADH-dependent flavin oxidoreductase nadA (444 aa).

Residues 37–40 (ERMC) and Gln-123 contribute to the FMN site. The disordered stretch occupies residues 127–149 (PGRQTPSHRQPEPISASDVPLDT). A substrate-binding site is contributed by 192-195 (HAAH). Residue 345 to 346 (AR) coordinates FMN.

This sequence belongs to the NADH:flavin oxidoreductase/NADH oxidase family.

It localises to the cytoplasm. Its subcellular location is the cytosol. Functionally, NADH-dependent flavin oxidoreductase; part of the gene cluster that mediates the biosynthesis of aflatoxins, a group of polyketide-derived furanocoumarins, and part of the most toxic and carcinogenic compounds among the known mycotoxins. The four major aflatoxins produced by A.parasiticus are aflatoxin B1 (AFB1), aflatoxin B2 (AFB2), aflatoxin G1 (AFG1) and aflatoxin G2 (AFG2). Within the aflatoxin pathway, the NADH-dependent flavin oxidoreductase nadA is specifically required for the last steps in which OMST is converted specifically to aflatoxin G1. The biosynthesis of aflatoxins begins with the norsolorinic acid synthase aflC that combines a hexanoyl starter unit produced by the fatty acid synthase aflA/aflB and 7 malonyl-CoA extender units to synthesize the precursor NOR. The second step is the conversion of NOR to averantin and requires the norsolorinic acid ketoreductase aflD, which catalyzes the dehydration of norsolorinic acid to form (1'S)-averantin. The norsolorinic acid reductases aflE and aflF may also play a role in the conversion of NOR to AVN. The cytochrome P450 monooxygenase aflG then catalyzes the hydroxylation of AVN to 5'hydroxyaverantin (HAVN). The next step is performed by the 5'-hydroxyaverantin dehydrogenase aflH that transforms HAVN to 5'-oxoaverantin (OAVN) which is further converted to averufin (AVF) by aflK that plays a dual role in the pathway, as a 5'-oxoaverantin cyclase that mediates conversion of 5'-oxoaverantin, as well as a versicolorin B synthase in a later step in the pathway. The averufin oxidase aflI catalyzes the conversion of AVF to versiconal hemiacetal acetate (VHA). VHA is then the substrate for the versiconal hemiacetal acetate esterase aflJ to yield versiconal (VAL). Versicolorin B synthase aflK then converts VAL to versicolorin B (VERB) by closing the bisfuran ring of aflatoxin which is required for DNA-binding, thus giving to aflatoxin its activity as a mutagen. Then, the activity of the versicolorin B desaturase aflL leads to versicolorin A (VERA). A branch point starts from VERB since it can also be converted to dihydrodemethylsterigmatocystin (DMDHST), probably also by aflL, VERA being a precursor for aflatoxins B1 and G1, and DMDHST for aflatoxins B2 and G2. Next, the versicolorin reductase aflM and the cytochrome P450 monooxygenase aflN are involved in conversion of VERA to demethylsterigmatocystin (DMST). AflX and aflY seem also involved in this step, through probable aflX-mediated epoxide ring-opening step following versicolorin A oxidation and aflY-mediated Baeyer-Villiger oxidation required for the formation of the xanthone ring. The methyltransferase aflO then leads to the modification of DMST to sterigmatocystin (ST), and of DMDHST to dihydrosterigmatocystin (DHST). Both ST and DHST are then substrates of the O-methyltransferase aflP to yield O-methylsterigmatocystin (OMST) and dihydro-O-methylsterigmatocystin (DHOMST), respectively. Finally OMST is converted to aflatoxins B1 and G1, and DHOMST to aflatoxins B2 and G2, via the action of several enzymes including O-methylsterigmatocystin oxidoreductase aflQ, the cytochrome P450 monooxygenase aflU, but also the NADH-dependent flavin oxidoreductase nadA which is specifically required for the synthesis of AFG1. The chain is NADH-dependent flavin oxidoreductase nadA from Aspergillus parasiticus (strain ATCC 56775 / NRRL 5862 / SRRC 143 / SU-1).